The following is a 143-amino-acid chain: Large-conductance mechanosensitive channel (143 aa).

A run of 2 helical transmembrane segments spans residues 10 to 30 and 89 to 109; these read FAVKGNVMDLAVGVIIGGAFS and GSFITVAINFVILAFIIFLMV.

The protein belongs to the MscL family. As to quaternary structure, homopentamer.

The protein resides in the cell inner membrane. Functionally, channel that opens in response to stretch forces in the membrane lipid bilayer. May participate in the regulation of osmotic pressure changes within the cell. This chain is Large-conductance mechanosensitive channel, found in Burkholderia vietnamiensis (strain G4 / LMG 22486) (Burkholderia cepacia (strain R1808)).